Reading from the N-terminus, the 461-residue chain is Cysteine--tRNA ligase (461 aa).

Position 28 (cysteine 28) interacts with Zn(2+). Residues 30–40 (ITIYDLCHIGH) carry the 'HIGH' region motif. Cysteine 209, histidine 234, and glutamate 238 together coordinate Zn(2+). The 'KMSKS' region motif lies at 266–270 (KMSKS). Lysine 269 contributes to the ATP binding site.

This sequence belongs to the class-I aminoacyl-tRNA synthetase family. Monomer. Requires Zn(2+) as cofactor.

Its subcellular location is the cytoplasm. The catalysed reaction is tRNA(Cys) + L-cysteine + ATP = L-cysteinyl-tRNA(Cys) + AMP + diphosphate. In Yersinia pseudotuberculosis serotype O:3 (strain YPIII), this protein is Cysteine--tRNA ligase.